Consider the following 225-residue polypeptide: Protein-disulfide oxidoreductase DsbI (225 aa).

Residues 27 to 47 (FLWLLMAIAMGGLIILAHSFF) traverse the membrane as a helical segment. Cysteines 56 and 59 form a disulfide. 2 helical membrane passes run 65–85 (AMFV…NIVL) and 87–107 (LIGC…SIKL). A disulfide bridge links C128 with C154. A helical transmembrane segment spans residues 199–219 (CMLAFGLCLILLLVMSGAWAL).

Belongs to the DsbB family. DsbI subfamily. In terms of assembly, interacts with DsbL.

The protein localises to the cell inner membrane. In terms of biological role, required for disulfide bond formation in some proteins. Part of a redox system composed of DsbI and DsbL that mediates formation of an essential disulfide bond in AssT. In Salmonella choleraesuis (strain SC-B67), this protein is Protein-disulfide oxidoreductase DsbI.